A 598-amino-acid polypeptide reads, in one-letter code: Nitrate/nitrite sensor protein NarX (598 aa).

At 1–14 (MLKRCLSPLTLVNQ) the chain is on the cytoplasmic side. Residues 15–37 (VALIVLLSTAIGLAGMAVSGWLV) traverse the membrane as a helical segment. Topologically, residues 38-151 (QGVQGSAHAI…DRTTEMRIET (114 aa)) are periplasmic. The chain crosses the membrane as a helical span at residues 152–174 (VVLVHRVMAVFMALLLVFTIIWL). Topologically, residues 175-598 (RARLLQPWRQ…FTDVQGDTHE (424 aa)) are cytoplasmic. Residues 176–228 (ARLLQPWRQLLAMASAVSHRDFTQRANISGRNEMAMLGTALNNMSAELAESYA) form the HAMP domain. Residues 393–587 (TIARELHDSI…EVVVTFIPEK (195 aa)) form the Histidine kinase domain. The residue at position 399 (histidine 399) is a Phosphohistidine; by autocatalysis.

Its subcellular location is the cell inner membrane. The enzyme catalyses ATP + protein L-histidine = ADP + protein N-phospho-L-histidine.. Functionally, acts as a sensor for nitrate/nitrite and transduces signal of nitrate availability to the NarL protein and of both nitrate/nitrite to the NarP protein. NarX probably activates NarL and NarP by phosphorylation in the presence of nitrate. NarX also plays a negative role in controlling NarL activity, probably through dephosphorylation in the absence of nitrate. This chain is Nitrate/nitrite sensor protein NarX (narX), found in Escherichia coli O157:H7.